A 303-amino-acid polypeptide reads, in one-letter code: UDP-N-acetylenolpyruvoylglucosamine reductase (303 aa).

The region spanning 30 to 196 (IGGPADLLII…LEAVFKLKQD (167 aa)) is the FAD-binding PCMH-type domain. The active site involves arginine 174. The Proton donor role is filled by serine 225. Glutamate 295 is an active-site residue.

The protein belongs to the MurB family. It depends on FAD as a cofactor.

It is found in the cytoplasm. It catalyses the reaction UDP-N-acetyl-alpha-D-muramate + NADP(+) = UDP-N-acetyl-3-O-(1-carboxyvinyl)-alpha-D-glucosamine + NADPH + H(+). Its pathway is cell wall biogenesis; peptidoglycan biosynthesis. In terms of biological role, cell wall formation. The chain is UDP-N-acetylenolpyruvoylglucosamine reductase from Bacillus pumilus (strain SAFR-032).